Reading from the N-terminus, the 105-residue chain is Sec-independent protein translocase protein TatA (105 aa).

A helical transmembrane segment spans residues 1 to 21 (MSLGPWEIGIIVLLIIVLFGA). The segment covering 41-50 (EVKEMNKDGD) has biased composition (basic and acidic residues). The segment at 41–105 (EVKEMNKDGD…QNYEDPNRTS (65 aa)) is disordered. Low complexity predominate over residues 52 to 92 (PEQQQQPQQQIAPNQIEAPQPNFEQHYQGQQVQQPQNPQTP). A compositionally biased stretch (basic and acidic residues) spans 96-105 (QNYEDPNRTS).

This sequence belongs to the TatA/E family. The Tat system comprises two distinct complexes: a TatABC complex, containing multiple copies of TatA, TatB and TatC subunits, and a separate TatA complex, containing only TatA subunits. Substrates initially bind to the TatABC complex, which probably triggers association of the separate TatA complex to form the active translocon.

It localises to the cell membrane. Functionally, part of the twin-arginine translocation (Tat) system that transports large folded proteins containing a characteristic twin-arginine motif in their signal peptide across membranes. TatA could form the protein-conducting channel of the Tat system. The chain is Sec-independent protein translocase protein TatA from Corynebacterium glutamicum (strain ATCC 13032 / DSM 20300 / JCM 1318 / BCRC 11384 / CCUG 27702 / LMG 3730 / NBRC 12168 / NCIMB 10025 / NRRL B-2784 / 534).